A 656-amino-acid chain; its full sequence is Protein sly1 homolog (656 aa).

4 tandem repeats follow at residues 85–121, 203–245, 419–456, and 460–496. The interval 85-496 is 4 X approximate repeats; that stretch reads DENLDRIQQD…QATQYEGGGT (412 aa).

This sequence belongs to the STXBP/unc-18/SEC1 family.

The protein resides in the cytoplasm. Its subcellular location is the membrane. In terms of biological role, non-vital for development. The chain is Protein sly1 homolog (Slh) from Drosophila virilis (Fruit fly).